A 100-amino-acid polypeptide reads, in one-letter code: Urease subunit gamma (100 aa).

Belongs to the urease gamma subunit family. Heterotrimer of UreA (gamma), UreB (beta) and UreC (alpha) subunits. Three heterotrimers associate to form the active enzyme.

Its subcellular location is the cytoplasm. It catalyses the reaction urea + 2 H2O + H(+) = hydrogencarbonate + 2 NH4(+). Its pathway is nitrogen metabolism; urea degradation; CO(2) and NH(3) from urea (urease route): step 1/1. The sequence is that of Urease subunit gamma from Herpetosiphon aurantiacus (strain ATCC 23779 / DSM 785 / 114-95).